A 1218-amino-acid polypeptide reads, in one-letter code: Coatomer subunit alpha-2 (1218 aa).

WD repeat units lie at residues 7-48 (TKSN…DRFD), 49-88 (EHEG…CLFT), 91-132 (GHLD…SVLT), 133-172 (GHNH…KKSA), 202-241 (GHDR…AWEV), 246-285 (GHMN…GIQT), 288-326 (REHD…PAFA), and 363-404 (SLNQ…VGRS). The disordered stretch occupies residues 826 to 849 (NRGAVDEEEEDVEGDWGEGLDKFD). A compositionally biased stretch (acidic residues) spans 831 to 843 (DEEEEDVEGDWGE).

As to quaternary structure, oligomeric complex that consists of at least the alpha, beta, beta', gamma, delta, epsilon and zeta subunits.

Its subcellular location is the cytoplasm. The protein localises to the golgi apparatus membrane. It is found in the cytoplasmic vesicle. The protein resides in the COPI-coated vesicle membrane. Functionally, the coatomer is a cytosolic protein complex that binds to dilysine motifs and reversibly associates with Golgi non-clathrin-coated vesicles, which further mediate biosynthetic protein transport from the ER, via the Golgi up to the trans Golgi network. Coatomer complex is required for budding from Golgi membranes, and is essential for the retrograde Golgi-to-ER transport of dilysine-tagged proteins. This Arabidopsis thaliana (Mouse-ear cress) protein is Coatomer subunit alpha-2.